The sequence spans 413 residues: MKKSKASALLWLFSLVGFMLHAQTFNLNQPMVAQNVIFEEKDGLVAVEAEYFYKQTHTDLREWYRTTKDSVAVVGRDEDANHYLNASNSSYIEVLPDTRVTHSDQLVRGVNFSNKPGQLAVVSYKIKFNSPGRYYVWVRALSTGSEDNGLHVGLNGTWPEHGQRMQWCDGKKYWMWESKQRTKDEHCGVPHAIYLDVPKAGIHEVQFSMREDGFEFDKFVLTTNSNYVPIDKGPNMTLADGNLPSSYKSKSEPSYFNTIARKLPENKFIASQEFPIDGTNFYKNGKNWLAINPEQYKQAKISTLFDFESGTYDVIYVGVGENDGRSTFRIVINNKELGTYQPPLTQMLWEEGKAFNGFWKNVKLNKGDTITVEVQVASDGNEWTRGRWAGIVFAPVGQGYVVQESPSTYIFEK.

The signal sequence occupies residues 1–22; sequence MKKSKASALLWLFSLVGFMLHA.

It localises to the periplasm. Functionally, may be involved in ulvan degradation. Ulvan is the main polysaccharide component of the Ulvales (green seaweed) cell wall. It is composed of disaccharide building blocks comprising 3-sulfated rhamnose (Rha3S) linked to D-glucuronic acid (GlcA), L-iduronic acid (IduA), or D-xylose (Xyl). This is an uncharacterized protein from Formosa agariphila (strain DSM 15362 / KCTC 12365 / LMG 23005 / KMM 3901 / M-2Alg 35-1).